The chain runs to 301 residues: Glycine--tRNA ligase alpha subunit (301 aa).

It belongs to the class-II aminoacyl-tRNA synthetase family. In terms of assembly, tetramer of two alpha and two beta subunits.

It localises to the cytoplasm. The catalysed reaction is tRNA(Gly) + glycine + ATP = glycyl-tRNA(Gly) + AMP + diphosphate. The chain is Glycine--tRNA ligase alpha subunit from Campylobacter hominis (strain ATCC BAA-381 / DSM 21671 / CCUG 45161 / LMG 19568 / NCTC 13146 / CH001A).